The chain runs to 250 residues: Phosphatidylglycerol--prolipoprotein diacylglyceryl transferase (250 aa).

Helical transmembrane passes span 11-31 (LAIRWYGVIISIGAALGLLLA), 49-69 (FLIAFPSAIIGARLYYVIFEF), 84-104 (QGGLAIHGGIIFGVLAVYIYL), and 109-129 (ESFFEYVDVAAPSIILGQAIG). R130 lines the a 1,2-diacyl-sn-glycero-3-phospho-(1'-sn-glycerol) pocket. 3 helical membrane-spanning segments follow: residues 169 to 189 (PTFLYESIWNFIVCIFLVYLL), 196 to 216 (GIVFMAYIGLYSLGRFFIEGL), and 228 to 248 (VAQLISVLGIILSIFFIYNII).

Belongs to the Lgt family.

It localises to the cell membrane. It carries out the reaction L-cysteinyl-[prolipoprotein] + a 1,2-diacyl-sn-glycero-3-phospho-(1'-sn-glycerol) = an S-1,2-diacyl-sn-glyceryl-L-cysteinyl-[prolipoprotein] + sn-glycerol 1-phosphate + H(+). Its pathway is protein modification; lipoprotein biosynthesis (diacylglyceryl transfer). Catalyzes the transfer of the diacylglyceryl group from phosphatidylglycerol to the sulfhydryl group of the N-terminal cysteine of a prolipoprotein, the first step in the formation of mature lipoproteins. This Clostridium botulinum (strain 657 / Type Ba4) protein is Phosphatidylglycerol--prolipoprotein diacylglyceryl transferase.